A 334-amino-acid polypeptide reads, in one-letter code: Protein-methionine-sulfoxide reductase catalytic subunit MsrP (334 aa).

Positions 1–44 (MKKIRPLTEADVTAESAFFMQRRQVLKALGISAAALSLPSTAQA) form a signal peptide, tat-type signal. Mo-molybdopterin-binding positions include asparagine 88, 91–92 (YE), cysteine 146, threonine 181, asparagine 233, arginine 238, and 249–251 (GIK).

It belongs to the MsrP family. As to quaternary structure, heterodimer of a catalytic subunit (MsrP) and a heme-binding subunit (MsrQ). It depends on Mo-molybdopterin as a cofactor. In terms of processing, predicted to be exported by the Tat system. The position of the signal peptide cleavage has not been experimentally proven.

Its subcellular location is the periplasm. It catalyses the reaction L-methionyl-[protein] + a quinone + H2O = L-methionyl-(S)-S-oxide-[protein] + a quinol. It carries out the reaction L-methionyl-[protein] + a quinone + H2O = L-methionyl-(R)-S-oxide-[protein] + a quinol. Part of the MsrPQ system that repairs oxidized periplasmic proteins containing methionine sulfoxide residues (Met-O), using respiratory chain electrons. Thus protects these proteins from oxidative-stress damage caused by reactive species of oxygen and chlorine generated by the host defense mechanisms. MsrPQ is essential for the maintenance of envelope integrity under bleach stress, rescuing a wide series of structurally unrelated periplasmic proteins from methionine oxidation, including the primary periplasmic chaperone SurA and the lipoprotein Pal. The catalytic subunit MsrP is non-stereospecific, being able to reduce both (R-) and (S-) diastereoisomers of methionine sulfoxide. This is Protein-methionine-sulfoxide reductase catalytic subunit MsrP from Salmonella agona (strain SL483).